We begin with the raw amino-acid sequence, 917 residues long: Phosphoenolpyruvate carboxylase (917 aa).

Catalysis depends on residues His145 and Lys578.

It belongs to the PEPCase type 1 family. Requires Mg(2+) as cofactor.

The catalysed reaction is oxaloacetate + phosphate = phosphoenolpyruvate + hydrogencarbonate. Functionally, forms oxaloacetate, a four-carbon dicarboxylic acid source for the tricarboxylic acid cycle. In Azoarcus sp. (strain BH72), this protein is Phosphoenolpyruvate carboxylase.